We begin with the raw amino-acid sequence, 120 residues long: Aspartate 1-decarboxylase (120 aa).

Ser-25 serves as the catalytic Schiff-base intermediate with substrate; via pyruvic acid. Ser-25 is subject to Pyruvic acid (Ser). Thr-57 is a substrate binding site. Residue Tyr-58 is the Proton donor of the active site. 73–75 (GAA) is a substrate binding site.

This sequence belongs to the PanD family. Heterooctamer of four alpha and four beta subunits. Pyruvate is required as a cofactor. In terms of processing, is synthesized initially as an inactive proenzyme, which is activated by self-cleavage at a specific serine bond to produce a beta-subunit with a hydroxyl group at its C-terminus and an alpha-subunit with a pyruvoyl group at its N-terminus.

It localises to the cytoplasm. It carries out the reaction L-aspartate + H(+) = beta-alanine + CO2. The protein operates within cofactor biosynthesis; (R)-pantothenate biosynthesis; beta-alanine from L-aspartate: step 1/1. In terms of biological role, catalyzes the pyruvoyl-dependent decarboxylation of aspartate to produce beta-alanine. This chain is Aspartate 1-decarboxylase, found in Thermus thermophilus (strain ATCC 27634 / DSM 579 / HB8).